Consider the following 181-residue polypeptide: D-lyxose/D-mannose isomerase (181 aa).

The Mn(2+) site is built by His-75, His-77, Glu-88, and His-143.

Belongs to the D-lyxose ketol-isomerase family. In terms of assembly, homodimer. The cofactor is Mn(2+).

It catalyses the reaction D-lyxose = D-xylulose. The enzyme catalyses D-mannose = D-fructose. In terms of biological role, sugar isomerase that catalyzes the reversible isomerization of D-lyxose to D-xylulose, and D-mannose to D-fructose. Shows optimum activity using D-lyxose as substrate, but can also effectively catalyze the isomerization between D-fructose and D-mannose. The chain is D-lyxose/D-mannose isomerase from Thermosediminibacter oceani (strain ATCC BAA-1034 / DSM 16646 / JW/IW-1228P).